Consider the following 113-residue polypeptide: MICLKILRFYQKFLSPLKPAACRYYPSCSEYALWQFQKKNFFLAFLSTFFRILRCNPFFKGGFDYPKVSKNFYPMNLCFKPMFLAKKQLCFLYIPYKNKSFYLIKIIFKRTNQ.

The protein belongs to the UPF0161 family.

Its subcellular location is the cell inner membrane. Could be involved in insertion of integral membrane proteins into the membrane. The polypeptide is Putative membrane protein insertion efficiency factor (Campylobacter jejuni subsp. doylei (strain ATCC BAA-1458 / RM4099 / 269.97)).